The following is a 296-amino-acid chain: Ribosomal RNA small subunit methyltransferase A (296 aa).

Asn-32, Leu-34, Gly-59, Glu-80, Asp-105, and Asn-130 together coordinate S-adenosyl-L-methionine.

It belongs to the class I-like SAM-binding methyltransferase superfamily. rRNA adenine N(6)-methyltransferase family. RsmA subfamily.

The protein localises to the cytoplasm. It catalyses the reaction adenosine(1518)/adenosine(1519) in 16S rRNA + 4 S-adenosyl-L-methionine = N(6)-dimethyladenosine(1518)/N(6)-dimethyladenosine(1519) in 16S rRNA + 4 S-adenosyl-L-homocysteine + 4 H(+). Functionally, specifically dimethylates two adjacent adenosines (A1518 and A1519) in the loop of a conserved hairpin near the 3'-end of 16S rRNA in the 30S particle. May play a critical role in biogenesis of 30S subunits. The sequence is that of Ribosomal RNA small subunit methyltransferase A from Ligilactobacillus salivarius (strain UCC118) (Lactobacillus salivarius).